A 130-amino-acid chain; its full sequence is Endoglucanase 2 (130 aa).

Residues His-47, Asp-98, and Glu-107 contribute to the active site.

It belongs to the glycosyl hydrolase 9 (cellulase E) family.

It carries out the reaction Endohydrolysis of (1-&gt;4)-beta-D-glucosidic linkages in cellulose, lichenin and cereal beta-D-glucans.. Involved in ripening fruit process. In Persea americana (Avocado), this protein is Endoglucanase 2 (CEL2).